The sequence spans 413 residues: Probable inactive allantoicase (413 aa).

Belongs to the allantoicase family.

In terms of biological role, the function of this enzyme is unclear as allantoicase activity is not known to exist in mammals. The polypeptide is Probable inactive allantoicase (Rattus norvegicus (Rat)).